Consider the following 339-residue polypeptide: Ferrochelatase (339 aa).

Residues His-202 and Glu-283 each contribute to the Fe cation site.

This sequence belongs to the ferrochelatase family.

The protein resides in the cytoplasm. It catalyses the reaction heme b + 2 H(+) = protoporphyrin IX + Fe(2+). The protein operates within porphyrin-containing compound metabolism; protoheme biosynthesis; protoheme from protoporphyrin-IX: step 1/1. Catalyzes the ferrous insertion into protoporphyrin IX. This chain is Ferrochelatase, found in Psychrobacter sp. (strain PRwf-1).